Here is a 69-residue protein sequence, read N- to C-terminus: Large ribosomal subunit protein bL31 (69 aa).

4 residues coordinate Zn(2+): Cys17, Cys19, Cys37, and Cys40.

Belongs to the bacterial ribosomal protein bL31 family. Type A subfamily. As to quaternary structure, part of the 50S ribosomal subunit. Zn(2+) serves as cofactor.

Functionally, binds the 23S rRNA. The protein is Large ribosomal subunit protein bL31 of Caldicellulosiruptor saccharolyticus (strain ATCC 43494 / DSM 8903 / Tp8T 6331).